The primary structure comprises 244 residues: 3-oxoacyl-[acyl-carrier-protein] reductase FabG (244 aa).

NADP(+) is bound by residues 12–15, Thr-37, 59–60, and Asn-86; these read GASR and NV. Substrate is bound at residue Ser-138. Tyr-151 acts as the Proton acceptor in catalysis. NADP(+) is bound by residues 151–155 and Ile-184; that span reads YAAAK.

The protein belongs to the short-chain dehydrogenases/reductases (SDR) family. In terms of assembly, homotetramer.

The catalysed reaction is a (3R)-hydroxyacyl-[ACP] + NADP(+) = a 3-oxoacyl-[ACP] + NADPH + H(+). It functions in the pathway lipid metabolism; fatty acid biosynthesis. Functionally, catalyzes the NADPH-dependent reduction of beta-ketoacyl-ACP substrates to beta-hydroxyacyl-ACP products, the first reductive step in the elongation cycle of fatty acid biosynthesis. This is 3-oxoacyl-[acyl-carrier-protein] reductase FabG (fabG) from Vibrio cholerae serotype O1 (strain ATCC 39315 / El Tor Inaba N16961).